A 317-amino-acid polypeptide reads, in one-letter code: Large ribosomal subunit protein uL10z (317 aa).

The protein belongs to the universal ribosomal protein uL10 family. P0 forms a pentameric complex by interaction with dimers of P1 and P2. In terms of processing, phosphorylated.

Ribosomal protein P0 is the functional equivalent of E.coli protein L10. The protein is Large ribosomal subunit protein uL10z (RPP0A) of Arabidopsis thaliana (Mouse-ear cress).